Reading from the N-terminus, the 78-residue chain is DNA-directed RNA polymerase subunit omega (78 aa).

The protein belongs to the RNA polymerase subunit omega family. In cyanobacteria the RNAP catalytic core is composed of 2 alpha, 1 beta, 1 beta', 1 gamma and 1 omega subunit. When a sigma factor is associated with the core the holoenzyme is formed, which can initiate transcription.

It catalyses the reaction RNA(n) + a ribonucleoside 5'-triphosphate = RNA(n+1) + diphosphate. Promotes RNA polymerase assembly. Latches the N- and C-terminal regions of the beta' subunit thereby facilitating its interaction with the beta and alpha subunits. The sequence is that of DNA-directed RNA polymerase subunit omega from Prochlorococcus marinus (strain MIT 9312).